Consider the following 369-residue polypeptide: Phosphate acyltransferase (369 aa).

The interval 342-369 is disordered; it reads ASRAPNSQTAGGERAAAVPQSAQLRMDS.

It belongs to the PlsX family. Homodimer. Probably interacts with PlsY.

The protein localises to the cytoplasm. The catalysed reaction is a fatty acyl-[ACP] + phosphate = an acyl phosphate + holo-[ACP]. Its pathway is lipid metabolism; phospholipid metabolism. In terms of biological role, catalyzes the reversible formation of acyl-phosphate (acyl-PO(4)) from acyl-[acyl-carrier-protein] (acyl-ACP). This enzyme utilizes acyl-ACP as fatty acyl donor, but not acyl-CoA. The chain is Phosphate acyltransferase from Methylocella silvestris (strain DSM 15510 / CIP 108128 / LMG 27833 / NCIMB 13906 / BL2).